The following is a 132-amino-acid chain: Homeobox protein HD-4 (132 aa).

Residues glycine 29–alanine 88 constitute a DNA-binding region (homeobox). Residues serine 82 to alanine 101 form a disordered region.

The protein localises to the nucleus. The sequence is that of Homeobox protein HD-4 (HD-4) from Encephalitozoon cuniculi (strain GB-M1) (Microsporidian parasite).